Here is a 180-residue protein sequence, read N- to C-terminus: Large ribosomal subunit protein uL5 (180 aa).

Belongs to the universal ribosomal protein uL5 family. In terms of assembly, part of the 50S ribosomal subunit; part of the 5S rRNA/L5/L18/L25 subcomplex. Contacts the 5S rRNA and the P site tRNA. Forms a bridge to the 30S subunit in the 70S ribosome.

This is one of the proteins that bind and probably mediate the attachment of the 5S RNA into the large ribosomal subunit, where it forms part of the central protuberance. In the 70S ribosome it contacts protein S13 of the 30S subunit (bridge B1b), connecting the 2 subunits; this bridge is implicated in subunit movement. Contacts the P site tRNA; the 5S rRNA and some of its associated proteins might help stabilize positioning of ribosome-bound tRNAs. This is Large ribosomal subunit protein uL5 from Clostridium botulinum (strain ATCC 19397 / Type A).